The following is a 185-amino-acid chain: Orotate phosphoribosyltransferase (185 aa).

5-phospho-alpha-D-ribose 1-diphosphate contacts are provided by residues Arg-102, Lys-103, Lys-106, His-108, and 128 to 136; that span reads DDVITTGGS. Orotate is bound by residues Thr-132 and Arg-160.

This sequence belongs to the purine/pyrimidine phosphoribosyltransferase family. PyrE subfamily. In terms of assembly, homodimer. Requires Mg(2+) as cofactor.

The enzyme catalyses orotidine 5'-phosphate + diphosphate = orotate + 5-phospho-alpha-D-ribose 1-diphosphate. Its pathway is pyrimidine metabolism; UMP biosynthesis via de novo pathway; UMP from orotate: step 1/2. Functionally, catalyzes the transfer of a ribosyl phosphate group from 5-phosphoribose 1-diphosphate to orotate, leading to the formation of orotidine monophosphate (OMP). The protein is Orotate phosphoribosyltransferase of Leptospira biflexa serovar Patoc (strain Patoc 1 / Ames).